The sequence spans 696 residues: MDATVILPILKKKLAFLSGGKDRRSGLILTIPLCSDQTSMDELSVTLDYLLSIPSDKCKARGFTVIVDGRKSQWNVVKTVVLMLQNVVPAEVSLVCVVKPDEFWDKKVTHFCFWKEKDRLGFEVILVSGNKLTRYIEPNQLTEEFGGSLTYDHMDWLNKRLVFEKFTKESTSLLDELAVINNGSDKGSQNEKERSVDFNYLPSVDPETVLQTGHELLSELQQRRFNGSDGGVSWSPMDDELLAQPQVMKLLDSLREQYTRYQEVCRQRSKRTQLDEIQQKVMQVVNWLEGPGSEQLRTQWGIGDSIRASQALQQKHEEIESQHSEWFAVYVELNQQIAALLNAGDEEDLVELKTLQQRLSDVCYRQASQLEFRQNLLQTALDFHSVAQDLSQQLDGLLGMLCVDVAPTDGAAIQQTLKLLEEKLKSVDTGLQGLREKGQGLLDQITNQASWAYGKDVSTENKDNVDHIQGIMEDMQLRKQRCEDMVDVRRLKMLQMVQLFKCEEDAAQAVDWLNELLDALLKTHIRLGDDSQETKILLEKHRKFVDVAQSTYDYGRQLLQATVVLCQSLRCTSRSSGDTLPKLNRVWKQFTITSEERVHRLEMALAFHSNAEKILQECPDLGETVMDFEQFDEVEAVGKSVLDRLTVPVIYPDGTEQYFGTPSDMASTAEHIRERIKMVCLKKQQLLEPDESIRES.

A CRAL-TRIO domain is found at 1–153; that stretch reads MDATVILPIL…EFGGSLTYDH (153 aa). Spectrin repeat units lie at residues 272–378, 381–494, and 500–602; these read TQLD…NLLQ, LDFH…LKML, and FKCE…HRLE.

It belongs to the SOLO family.

In terms of biological role, may act as the primary docking protein directing membrane turnover and assembly of the transient receptor potential channels trpc4 and trpc5. Binds phospholipids. This is SEC14 domain and spectrin repeat-containing protein 1 (sestd1) from Xenopus tropicalis (Western clawed frog).